The sequence spans 299 residues: GTPase Era (299 aa).

The Era-type G domain occupies 5 to 172; that stretch reads KSGFVSIIGR…IDVLKSFLPE (168 aa). The interval 13 to 20 is G1; it reads GRPNVGKS. Position 13 to 20 (13 to 20) interacts with GTP; the sequence is GRPNVGKS. Positions 39–43 are G2; it reads QTTRN. Residues 60–63 form a G3 region; the sequence is DTPG. GTP-binding positions include 60 to 64 and 122 to 125; these read DTPGI and NKID. The interval 122–125 is G4; sequence NKID. The segment at 151-153 is G5; that stretch reads ISA. The 78-residue stretch at 203 to 280 folds into the KH type-2 domain; that stretch reads TSEEIPHAIG…YLELWVKVQR (78 aa).

The protein belongs to the TRAFAC class TrmE-Era-EngA-EngB-Septin-like GTPase superfamily. Era GTPase family. Monomer.

Its subcellular location is the cytoplasm. It is found in the cell membrane. In terms of biological role, an essential GTPase that binds both GDP and GTP, with rapid nucleotide exchange. Plays a role in 16S rRNA processing and 30S ribosomal subunit biogenesis and possibly also in cell cycle regulation and energy metabolism. The polypeptide is GTPase Era (Staphylococcus epidermidis (strain ATCC 12228 / FDA PCI 1200)).